Consider the following 196-residue polypeptide: Small ribosomal subunit protein uS4c (196 aa).

The interval 17 to 38 (ALPGLTRKTPKSRSNLKKKFHS) is disordered. Basic residues predominate over residues 24–38 (KTPKSRSNLKKKFHS). The 81-residue stretch at 89 to 169 (MRLDNILFRL…LPKHLTIDTL (81 aa)) folds into the S4 RNA-binding domain.

The protein belongs to the universal ribosomal protein uS4 family. Part of the 30S ribosomal subunit. Contacts protein S5. The interaction surface between S4 and S5 is involved in control of translational fidelity.

It localises to the plastid. Its subcellular location is the chloroplast. One of the primary rRNA binding proteins, it binds directly to 16S rRNA where it nucleates assembly of the body of the 30S subunit. Functionally, with S5 and S12 plays an important role in translational accuracy. The sequence is that of Small ribosomal subunit protein uS4c (rps4) from Lygeum spartum.